A 321-amino-acid chain; its full sequence is Type 3 secretion system translocon protein SctB (321 aa).

A helical transmembrane segment spans residues 99–119 (AALIGGAISSVLGILGSFAAI).

Belongs to the SctB/EspB family. In terms of assembly, the core secretion machinery of the T3SS is composed of approximately 20 different proteins, including cytoplasmic components, a base, an export apparatus and a needle. This subunit is involved in the formation of a pore, called the translocon, in host membrane.

It is found in the secreted. The protein localises to the cell surface. Its subcellular location is the host membrane. Functionally, component of the type III secretion system (T3SS), also called injectisome, which is used to inject bacterial effector proteins into eukaryotic host cells. EspD and EspB are inserted into the host membrane where they form a pore and allow the translocation of effector proteins into the cytosol of target cells. Necessary for intimate attachment to epithelial cells. The chain is Type 3 secretion system translocon protein SctB from Escherichia coli O127:H6 (strain E2348/69 / EPEC).